The following is a 331-amino-acid chain: Hydroxysteroid dehydrogenase-like protein 1 (331 aa).

A required for mitochondria translocation region spans residues 2-82; that stretch reads AAVDRFNLLY…TGSTDGIGKA (81 aa). Residues 74-80 and aspartate 125 each bind NADP(+); that span reads GSTDGIG. Serine 205 serves as a coordination point for substrate. The Proton acceptor role is filled by tyrosine 218. Lysine 222 provides a ligand contact to NADP(+).

The protein belongs to the short-chain dehydrogenases/reductases (SDR) family. 17-beta-HSD 3 subfamily.

It is found in the mitochondrion. May catalyze the metabolism of steroid hormones and thus play an important role in sex differentiation, the emergence and maintenance of the secondary sexual characters, and the regulation of endocrine. The protein is Hydroxysteroid dehydrogenase-like protein 1 (HSDL1) of Gallus gallus (Chicken).